The chain runs to 335 residues: MVEKIWFDNHPLKYLLWPLLWPLSLLFGAISKSKRQQYQSGKKQAYKAPVPVVVVGNITAGGNGKTPVVVWLVEQLQQLGYKPGVVSRGYGAKAPQYPLVLDDNTPAKHCGDEPKLIYRRTAAPVAVDPVRANAVKALLETSVDIIITDDGLQHYALERDIEFVIVDGNRRFGNESLIPLGPLREGVERLSEVDFIITNGGQAQYGEMPMSLTPSKAINLKTKQQVEVSELRDLVAFAGIGHPPRFFNTLNAMNADVKVTKGFADHQDFDRQELQALAQQGANVIMTEKDAVKCDSYAQDNWWYLPVSAQFESNDAERILNRIKEVKATYGSPSA.

59-66 is an ATP binding site; it reads TAGGNGKT.

This sequence belongs to the LpxK family.

The enzyme catalyses a lipid A disaccharide + ATP = a lipid IVA + ADP + H(+). Its pathway is glycolipid biosynthesis; lipid IV(A) biosynthesis; lipid IV(A) from (3R)-3-hydroxytetradecanoyl-[acyl-carrier-protein] and UDP-N-acetyl-alpha-D-glucosamine: step 6/6. Transfers the gamma-phosphate of ATP to the 4'-position of a tetraacyldisaccharide 1-phosphate intermediate (termed DS-1-P) to form tetraacyldisaccharide 1,4'-bis-phosphate (lipid IVA). This chain is Tetraacyldisaccharide 4'-kinase, found in Vibrio campbellii (strain ATCC BAA-1116).